A 360-amino-acid polypeptide reads, in one-letter code: sn-glycerol-3-phosphate import ATP-binding protein UgpC (360 aa).

The region spanning 4-235 (LSLKGVKKSY…PATTFVASFI (232 aa)) is the ABC transporter domain. An ATP-binding site is contributed by 37 to 44 (GPSGCGKS).

It belongs to the ABC transporter superfamily. sn-glycerol-3-phosphate importer (TC 3.A.1.1.3) family. The complex is composed of two ATP-binding proteins (UgpC), two transmembrane proteins (UgpA and UgpE) and a solute-binding protein (UgpB).

The protein resides in the cell inner membrane. It carries out the reaction sn-glycerol 3-phosphate(out) + ATP + H2O = sn-glycerol 3-phosphate(in) + ADP + phosphate + H(+). In terms of biological role, part of the ABC transporter complex UgpBAEC involved in sn-glycerol-3-phosphate (G3P) import. Responsible for energy coupling to the transport system. The sequence is that of sn-glycerol-3-phosphate import ATP-binding protein UgpC from Burkholderia mallei (strain ATCC 23344).